We begin with the raw amino-acid sequence, 312 residues long: Aspartate carbamoyltransferase catalytic subunit (312 aa).

Arg58 and Thr59 together coordinate carbamoyl phosphate. Residue Lys86 participates in L-aspartate binding. 3 residues coordinate carbamoyl phosphate: Arg108, His136, and Gln139. Positions 169 and 223 each coordinate L-aspartate. Carbamoyl phosphate is bound by residues Gly264 and Pro265.

The protein belongs to the aspartate/ornithine carbamoyltransferase superfamily. ATCase family. Heterododecamer (2C3:3R2) of six catalytic PyrB chains organized as two trimers (C3), and six regulatory PyrI chains organized as three dimers (R2).

The catalysed reaction is carbamoyl phosphate + L-aspartate = N-carbamoyl-L-aspartate + phosphate + H(+). Its pathway is pyrimidine metabolism; UMP biosynthesis via de novo pathway; (S)-dihydroorotate from bicarbonate: step 2/3. Functionally, catalyzes the condensation of carbamoyl phosphate and aspartate to form carbamoyl aspartate and inorganic phosphate, the committed step in the de novo pyrimidine nucleotide biosynthesis pathway. This chain is Aspartate carbamoyltransferase catalytic subunit, found in Endomicrobium trichonymphae.